The following is a 1348-amino-acid chain: Kinesin-like protein KIF7 (1348 aa).

In terms of domain architecture, Kinesin motor spans 15-349 (PVRVALRVRP…LNYASRAQNI (335 aa)). Residue 94 to 101 (GQTGSGKT) participates in ATP binding. Residues 358-479 (HPEAERVPEE…EDQAAQGTSG (122 aa)) form an interaction with DLG5 region. The interaction with SMO stretch occupies residues 358 to 1211 (HPEAERVPEE…LGRHMWINQE (854 aa)). Disordered stretches follow at residues 451-486 (RSTL…DEGT) and 607-674 (AQAD…VCPE). Residues 480–542 (RKGDEGTQQL…ELRLRLELAQ (63 aa)) are a coiled coil. Residues 620–636 (SEEEGEEEEEEEEEEEE) show a composition bias toward acidic residues. 2 coiled-coil regions span residues 698–1057 (APAA…IEAL) and 1109–1211 (FDKV…INQE). Position 903 is a phosphoserine (serine 903). Disordered regions lie at residues 1288-1314 (LCSE…VLPM) and 1328-1348 (KPRW…KNPL).

This sequence belongs to the TRAFAC class myosin-kinesin ATPase superfamily. Kinesin family. As to quaternary structure, can form homodimers and interacts with microtubules. Interacts with GLI1 and SMO. Interacts with GLI2, GLI3 and SUFU. Interacts with NPHP1. Interacts with SMO and DLG5 (via PDZ4 or guanylate kinase-like domain). In terms of processing, polyubiquitinated by UBR3. In terms of tissue distribution, expressed in heart, lung, liver, kidney, testis, spleen and cerebellum.

It is found in the cell projection. The protein resides in the cilium. The protein localises to the cytoplasm. Its subcellular location is the cytoskeleton. It localises to the cilium basal body. Essential for hedgehog signaling regulation: acts both as a negative and a positive regulator of sonic hedgehog (Shh) and Indian hedgehog (Ihh) pathways, acting downstream of SMO, through both SUFU-dependent and -independent mechanisms. Involved in the regulation of microtubular dynamics. Required for proper organization of the ciliary tip and control of ciliary localization of SUFU-GLI2 complexes. Required for localization of GLI3 to cilia in response to Shh. Negatively regulates Shh signaling by preventing inappropriate activation of the transcriptional activator GLI2 in the absence of ligand. Positively regulates Shh signaling by preventing the processing of the transcription factor GLI3 into its repressor form. In keratinocytes, promotes the dissociation of SUFU-GLI2 complexes, GLI2 nuclear translocation and Shh signaling activation. Involved in the regulation of epidermal differentiation and chondrocyte development. The protein is Kinesin-like protein KIF7 (Kif7) of Mus musculus (Mouse).